A 679-amino-acid polypeptide reads, in one-letter code: PHD finger protein PERSISTENT TAPETAL CELL 1 (679 aa).

The PHD-type zinc-finger motif lies at 620-670 (VVDCACGAVDDDGERMACCDICEAWQHTRCAGIADTEDAPHVFLCSRCDND).

Probable transcriptional activator required for tapetal programmed cell death (PCD) and degeneration, and pollen development in anthers. This chain is PHD finger protein PERSISTENT TAPETAL CELL 1, found in Oryza sativa subsp. japonica (Rice).